The sequence spans 152 residues: UPF0266 membrane protein ESA_01432 (152 aa).

3 consecutive transmembrane segments (helical) span residues Met-1 to Tyr-21, Ala-45 to His-65, and Ala-67 to Ile-87.

It belongs to the UPF0266 family.

Its subcellular location is the cell inner membrane. The sequence is that of UPF0266 membrane protein ESA_01432 from Cronobacter sakazakii (strain ATCC BAA-894) (Enterobacter sakazakii).